We begin with the raw amino-acid sequence, 484 residues long: Malonate-semialdehyde dehydrogenase 2 (484 aa).

The NAD(+) site is built by F153, K177, E180, R181, S230, and T252. C285 (nucleophile) is an active-site residue. E385 lines the NAD(+) pocket.

It belongs to the aldehyde dehydrogenase family. IolA subfamily. In terms of assembly, homotetramer.

It carries out the reaction 3-oxopropanoate + NAD(+) + CoA + H2O = hydrogencarbonate + acetyl-CoA + NADH + H(+). The catalysed reaction is 2-methyl-3-oxopropanoate + NAD(+) + CoA + H2O = propanoyl-CoA + hydrogencarbonate + NADH + H(+). It participates in polyol metabolism; myo-inositol degradation into acetyl-CoA; acetyl-CoA from myo-inositol: step 7/7. Its function is as follows. Catalyzes the oxidation of malonate semialdehyde (MSA) and methylmalonate semialdehyde (MMSA) into acetyl-CoA and propanoyl-CoA, respectively. Is involved in a myo-inositol catabolic pathway. Bicarbonate, and not CO2, is the end-product of the enzymatic reaction. This Geobacillus kaustophilus (strain HTA426) protein is Malonate-semialdehyde dehydrogenase 2.